The chain runs to 97 residues: Large ribosomal subunit protein bL28 (97 aa).

Belongs to the bacterial ribosomal protein bL28 family.

The polypeptide is Large ribosomal subunit protein bL28 (Rhizorhabdus wittichii (strain DSM 6014 / CCUG 31198 / JCM 15750 / NBRC 105917 / EY 4224 / RW1) (Sphingomonas wittichii)).